Consider the following 274-residue polypeptide: Cytochrome b-c1 complex subunit Rieske, mitochondrial (274 aa).

Residues 79-103 (SHTDVKVPDFSEYRRPEVLDSTKSS) are Mitochondrial matrix-facing. A helical transmembrane segment spans residues 104–140 (RESSEARKGFSYLVTAVTTVGVAYAAKNAVTQFVSSM). The Mitochondrial intermembrane portion of the chain corresponds to 141 to 274 (SASADVLALA…FTSDDMVIVG (134 aa)). The Rieske domain occupies 187 to 272 (EAAVELSQLR…YEFTSDDMVI (86 aa)). Positions 217, 219, 236, 239, and 241 each coordinate [2Fe-2S] cluster. Cysteines 222 and 238 form a disulfide.

It belongs to the Rieske iron-sulfur protein family. In terms of assembly, component of the ubiquinol-cytochrome c oxidoreductase (cytochrome b-c1 complex, complex III, CIII), a multisubunit enzyme composed of 11 subunits. The complex is composed of 3 respiratory subunits cytochrome b, cytochrome c1 and Rieske protein UQCRFS1, 2 core protein subunits UQCRC1/QCR1 and UQCRC2/QCR2, and 6 low-molecular weight protein subunits UQCRH/QCR6, UQCRB/QCR7, UQCRQ/QCR8, UQCR10/QCR9, UQCR11/QCR10 and subunit 9, the cleavage product of Rieske protein UQCRFS1. The complex exists as an obligatory dimer and forms supercomplexes (SCs) in the inner mitochondrial membrane with NADH-ubiquinone oxidoreductase (complex I, CI) and cytochrome c oxidase (complex IV, CIV), resulting in different assemblies (supercomplex SCI(1)III(2)IV(1) and megacomplex MCI(2)III(2)IV(2)). Incorporation of the Rieske protein UQCRFS1 is the penultimate step in complex III assembly. Interacts with TTC19, which is involved in the clearance of UQCRFS1 fragments. Component of the ubiquinol-cytochrome c oxidoreductase (cytochrome b-c1 complex, complex III, CIII). Subunit 9 corresponds to the mitochondrial targeting sequence (MTS) of Rieske protein UQCRFS1. It is retained after processing and incorporated inside complex III, where it remains bound to the complex and localizes between the 2 core subunits UQCRC1/QCR1 and UQCRC2/QCR2. [2Fe-2S] cluster is required as a cofactor. In terms of processing, proteolytic processing is necessary for the correct insertion of UQCRFS1 in the complex III dimer. Several fragments are generated during UQCRFS1 insertion, most probably due to the endogenous matrix-processing peptidase (MPP) activity of the 2 core protein subunits UQCRC1/QCR1 and UQCRC2/QCR2, which are homologous to the 2 mitochondrial-processing peptidase (MPP) subunits beta-MPP and alpha-MPP respectively. The action of the protease is also necessary for the clearance of the UQCRFS1 fragments.

It localises to the mitochondrion inner membrane. It catalyses the reaction a quinol + 2 Fe(III)-[cytochrome c](out) = a quinone + 2 Fe(II)-[cytochrome c](out) + 2 H(+)(out). Component of the ubiquinol-cytochrome c oxidoreductase, a multisubunit transmembrane complex that is part of the mitochondrial electron transport chain which drives oxidative phosphorylation. The respiratory chain contains 3 multisubunit complexes succinate dehydrogenase (complex II, CII), ubiquinol-cytochrome c oxidoreductase (cytochrome b-c1 complex, complex III, CIII) and cytochrome c oxidase (complex IV, CIV), that cooperate to transfer electrons derived from NADH and succinate to molecular oxygen, creating an electrochemical gradient over the inner membrane that drives transmembrane transport and the ATP synthase. The cytochrome b-c1 complex catalyzes electron transfer from ubiquinol to cytochrome c, linking this redox reaction to translocation of protons across the mitochondrial inner membrane, with protons being carried across the membrane as hydrogens on the quinol. In the process called Q cycle, 2 protons are consumed from the matrix, 4 protons are released into the intermembrane space and 2 electrons are passed to cytochrome c. The Rieske protein is a catalytic core subunit containing a [2Fe-2S] iron-sulfur cluster. It cycles between 2 conformational states during catalysis to transfer electrons from the quinol bound in the Q(0) site in cytochrome b to cytochrome c1. Incorporation of UQCRFS1 is the penultimate step in complex III assembly. Functionally, component of the ubiquinol-cytochrome c oxidoreductase (cytochrome b-c1 complex, complex III, CIII). UQCRFS1 undergoes proteolytic processing once it is incorporated in the complex III dimer. One of the fragments, called subunit 9, corresponds to its mitochondrial targeting sequence (MTS). The proteolytic processing is necessary for the correct insertion of UQCRFS1 in the complex III dimer, but the persistence of UQCRFS1-derived fragments may prevent newly imported UQCRFS1 to be processed and assembled into complex III and is detrimental for the complex III structure and function. This Symphalangus syndactylus (Siamang) protein is Cytochrome b-c1 complex subunit Rieske, mitochondrial (UQCRFS1).